A 398-amino-acid polypeptide reads, in one-letter code: Lipase member K (398 aa).

The signal sequence occupies residues 1–19 (MWWLLATTCCVLLSGPIDG). An AB hydrolase-1 domain is found at 78 to 377 (VVYLQHGLIA…HYNHMDFYLG (300 aa)). Ser171 acts as the Nucleophile in catalysis. Cys245 and Cys254 are joined by a disulfide. N-linked (GlcNAc...) asparagine glycans are attached at residues Asn270 and Asn326. Residues Asp342 and His371 each act as charge relay system in the active site.

It belongs to the AB hydrolase superfamily. Lipase family.

Its subcellular location is the secreted. Plays a highly specific role in the last step of keratinocyte differentiation. May have an essential function in lipid metabolism of the most differentiated epidermal layers. The sequence is that of Lipase member K (Lipk) from Mus musculus (Mouse).